The sequence spans 197 residues: Imidazoleglycerol-phosphate dehydratase (197 aa).

This sequence belongs to the imidazoleglycerol-phosphate dehydratase family.

It is found in the cytoplasm. The catalysed reaction is D-erythro-1-(imidazol-4-yl)glycerol 3-phosphate = 3-(imidazol-4-yl)-2-oxopropyl phosphate + H2O. The protein operates within amino-acid biosynthesis; L-histidine biosynthesis; L-histidine from 5-phospho-alpha-D-ribose 1-diphosphate: step 6/9. The polypeptide is Imidazoleglycerol-phosphate dehydratase (Syntrophobacter fumaroxidans (strain DSM 10017 / MPOB)).